The following is a 388-amino-acid chain: Galactokinase (388 aa).

Substrate is bound at residue 33–36 (EHTD). ATP-binding positions include Ser67 and 124-130 (GAGLSSS). Residues Ser130 and Glu162 each coordinate Mg(2+). The Proton acceptor role is filled by Asp174. Position 224 (Tyr224) interacts with substrate.

This sequence belongs to the GHMP kinase family. GalK subfamily.

The protein localises to the cytoplasm. The enzyme catalyses alpha-D-galactose + ATP = alpha-D-galactose 1-phosphate + ADP + H(+). It functions in the pathway carbohydrate metabolism; galactose metabolism. In terms of biological role, catalyzes the transfer of the gamma-phosphate of ATP to D-galactose to form alpha-D-galactose-1-phosphate (Gal-1-P). This Lacticaseibacillus casei (strain BL23) (Lactobacillus casei) protein is Galactokinase.